Here is a 155-residue protein sequence, read N- to C-terminus: 6,7-dimethyl-8-ribityllumazine synthase (155 aa).

Residues Phe23, Ala57–Glu59, and Ala81–Ile83 each bind 5-amino-6-(D-ribitylamino)uracil. Ala86–Thr87 contributes to the (2S)-2-hydroxy-3-oxobutyl phosphate binding site. His89 (proton donor) is an active-site residue. Phe114 contributes to the 5-amino-6-(D-ribitylamino)uracil binding site. Arg128 contacts (2S)-2-hydroxy-3-oxobutyl phosphate.

Belongs to the DMRL synthase family.

The enzyme catalyses (2S)-2-hydroxy-3-oxobutyl phosphate + 5-amino-6-(D-ribitylamino)uracil = 6,7-dimethyl-8-(1-D-ribityl)lumazine + phosphate + 2 H2O + H(+). The protein operates within cofactor biosynthesis; riboflavin biosynthesis; riboflavin from 2-hydroxy-3-oxobutyl phosphate and 5-amino-6-(D-ribitylamino)uracil: step 1/2. Catalyzes the formation of 6,7-dimethyl-8-ribityllumazine by condensation of 5-amino-6-(D-ribitylamino)uracil with 3,4-dihydroxy-2-butanone 4-phosphate. This is the penultimate step in the biosynthesis of riboflavin. The chain is 6,7-dimethyl-8-ribityllumazine synthase from Desulfotalea psychrophila (strain LSv54 / DSM 12343).